We begin with the raw amino-acid sequence, 224 residues long: MSFLPDFGIFTMGMWSVGLGAVGAAITGIVLANTDLFLSKPEKATLEFLEAIELKTLGSEPRTFKASELWKKNGAVIMAVRRPGUFLCREEASELSSLKPQLSKLGVPLYAVVKEKIGTEVEDFQHYFQGEIFLDEKRSFYGPRKRKMMLSGFFRIGVWQNFFRAWKNGYSGNLEGEGFTLGGVYVIGAGRQGILLEHREKEFGDKVSLPSVLEAAEKIKPQAS.

The tract at residues 14 to 112 is thioredoxin fold; it reads MWSVGLGAVG…SKLGVPLYAV (99 aa). Sec-85 is a non-standard amino acid (selenocysteine). The active-site Redox-active is Cys-88.

Belongs to the peroxiredoxin-like PRXL2 family. PRXL2A subfamily.

The protein resides in the cytoplasm. Involved in redox regulation of the cell. Acts as an antioxidant. Inhibits TNFSF11-induced NFKB1 and JUN activation and osteoclast differentiation. May affect bone resorption and help to maintain bone mass. The protein is Peroxiredoxin-like 2A (PRXL2A) of Gallus gallus (Chicken).